The sequence spans 599 residues: Cartilage intermediate layer protein 1 (599 aa).

N47, N416, and N472 each carry an N-linked (GlcNAc...) asparagine glycan. Polar residues predominate over residues 550 to 560; the sequence is QSTSARPSPAS. Positions 550 to 599 are disordered; it reads QSTSARPSPASTVRGRAPSRRQRASSGSQRQPRGVASLRFPGVAQQPLSN. Over residues 573-583 the composition is skewed to low complexity; it reads ASSGSQRQPRG.

In terms of assembly, monomer. Interacts with TGFB1. In terms of processing, cleaved into 2 chains possibly by a furin-like protease upon or preceding secretion. As to expression, specifically expressed in cartilage. Expressed at lower level in young cartilage than in adult cartilage. In adult cartilage, it is highly expressed throughout middeep zones.

It is found in the secreted. Its subcellular location is the extracellular space. It localises to the extracellular matrix. Probably plays a role in cartilage scaffolding. May act by antagonizing TGF-beta1 (TGFB1) and IGF1 functions. Has the ability to suppress IGF1-induced proliferation and sulfated proteoglycan synthesis, and inhibits ligand-induced IGF1R autophosphorylation. May inhibit TGFB1-mediated induction of cartilage matrix genes via its interaction with TGFB1. Overexpression may lead to impair chondrocyte growth and matrix repair and indirectly promote inorganic pyrophosphate (PPi) supersaturation in aging and osteoarthritis cartilage. This chain is Cartilage intermediate layer protein 1 (CILP), found in Sus scrofa (Pig).